Here is a 390-residue protein sequence, read N- to C-terminus: Phosphopentomutase (390 aa).

Asp-12, Asp-284, His-289, Asp-325, His-326, and His-337 together coordinate Mn(2+).

It belongs to the phosphopentomutase family. Mn(2+) is required as a cofactor.

It is found in the cytoplasm. It catalyses the reaction 2-deoxy-alpha-D-ribose 1-phosphate = 2-deoxy-D-ribose 5-phosphate. The catalysed reaction is alpha-D-ribose 1-phosphate = D-ribose 5-phosphate. The protein operates within carbohydrate degradation; 2-deoxy-D-ribose 1-phosphate degradation; D-glyceraldehyde 3-phosphate and acetaldehyde from 2-deoxy-alpha-D-ribose 1-phosphate: step 1/2. In terms of biological role, isomerase that catalyzes the conversion of deoxy-ribose 1-phosphate (dRib-1-P) and ribose 1-phosphate (Rib-1-P) to deoxy-ribose 5-phosphate (dRib-5-P) and ribose 5-phosphate (Rib-5-P), respectively. The polypeptide is Phosphopentomutase (Macrococcus caseolyticus (strain JCSC5402) (Macrococcoides caseolyticum)).